The following is a 211-amino-acid chain: Large ribosomal subunit protein bL9 (211 aa).

The interval 180 to 211 (DDIGAAGMDDDDDDAPAPAQADPSSEESSEED) is disordered.

It belongs to the bacterial ribosomal protein bL9 family.

Functionally, binds to the 23S rRNA. This is Large ribosomal subunit protein bL9 from Jannaschia sp. (strain CCS1).